A 564-amino-acid polypeptide reads, in one-letter code: uncharacterized protein (564 aa).

Residues 1–21 (MRRIGAITALSLPVLLSLLYS) form the signal peptide. A lipid anchor (N-palmitoyl cysteine) is attached at C22. C22 carries S-diacylglycerol cysteine lipidation.

It is found in the cell membrane. This is an uncharacterized protein from Aquifex aeolicus (strain VF5).